The sequence spans 196 residues: ECF RNA polymerase sigma factor SigK (196 aa).

The interval 39 to 105 (YDQTRARVYG…RAVDRVRSEQ (67 aa)) is sigma-70 factor domain-2. The Polymerase core binding motif lies at 62 to 65 (ETTQ). Residues 142 to 191 (CLDSLTDVQRECIQLAYYDGLTYAQVADRLAANLATIKSRMRDGIRALRK) form a sigma-70 factor domain-4 region. Positions 164–183 (YAQVADRLAANLATIKSRMR) form a DNA-binding region, H-T-H motif.

The protein belongs to the sigma-70 factor family. ECF subfamily. In terms of assembly, interacts transiently with the RNA polymerase catalytic core formed by RpoA, RpoB, RpoC and RpoZ (2 alpha, 1 beta, 1 beta' and 1 omega subunit) to form the RNA polymerase holoenzyme that can initiate transcription. Interacts (via sigma-70 factor domain 4) with anti-sigma-K factor RskA.

In terms of biological role, sigma factors are initiation factors that promote the attachment of RNA polymerase to specific initiation sites and are then released. Extracytoplasmic function (ECF) sigma factors are held in an inactive form by an anti-sigma factor until released by regulated intramembrane proteolysis. The chain is ECF RNA polymerase sigma factor SigK (sigK) from Mycolicibacterium vanbaalenii (strain DSM 7251 / JCM 13017 / BCRC 16820 / KCTC 9966 / NRRL B-24157 / PYR-1) (Mycobacterium vanbaalenii).